The primary structure comprises 459 residues: Glycosyl hydrolase family 109 protein (459 aa).

A signal peptide (tat-type signal) is located at residues 1–31; it reads MHNIHRRHFLKAAGAVTAGLITANITASTHA. NAD(+) contacts are provided by residues 64–65, Asp86, 135–138, 155–156, and Asn184; these read ER, WEWH, and EV. Residues Tyr213, Arg232, 244–247, and Tyr326 each bind substrate; that span reads YPTH. Tyr244 is a binding site for NAD(+).

This sequence belongs to the Gfo/Idh/MocA family. Glycosyl hydrolase 109 subfamily. NAD(+) serves as cofactor. Predicted to be exported by the Tat system. The position of the signal peptide cleavage has not been experimentally proven.

Glycosidase. This is Glycosyl hydrolase family 109 protein from Shewanella putrefaciens (strain CN-32 / ATCC BAA-453).